Reading from the N-terminus, the 411-residue chain is Na(+)-translocating NADH-quinone reductase subunit F (411 aa).

Residues Val5–Ile25 traverse the membrane as a helical segment. Positions Gly36 to Ile130 constitute a 2Fe-2S ferredoxin-type domain. Residues Cys73, Cys79, Cys82, and Cys114 each contribute to the [2Fe-2S] cluster site. The FAD-binding FR-type domain maps to Val133–Lys273. Residues Asp276 to Met393 are catalytic.

It belongs to the NqrF family. Composed of six subunits; NqrA, NqrB, NqrC, NqrD, NqrE and NqrF. [2Fe-2S] cluster is required as a cofactor. Requires FAD as cofactor.

Its subcellular location is the cell inner membrane. The catalysed reaction is a ubiquinone + n Na(+)(in) + NADH + H(+) = a ubiquinol + n Na(+)(out) + NAD(+). NQR complex catalyzes the reduction of ubiquinone-1 to ubiquinol by two successive reactions, coupled with the transport of Na(+) ions from the cytoplasm to the periplasm. The first step is catalyzed by NqrF, which accepts electrons from NADH and reduces ubiquinone-1 to ubisemiquinone by a one-electron transfer pathway. The chain is Na(+)-translocating NADH-quinone reductase subunit F from Haemophilus influenzae (strain ATCC 51907 / DSM 11121 / KW20 / Rd).